A 221-amino-acid chain; its full sequence is Thiol:disulfide interchange protein TlpA (221 aa).

Over 1–11 the chain is Cytoplasmic; that stretch reads MLDTKPSATRR. A helical membrane pass occupies residues 12–35; that stretch reads IPLVIATVAVGGLAGFAALYGLGL. The Periplasmic portion of the chain corresponds to 36 to 221; sequence SRAPTGDPAC…AATGKAAAAL (186 aa). 2 disulfide bridges follow: Cys-45/Cys-190 and Cys-107/Cys-110. The Thioredoxin domain occupies 69-215; that stretch reads ASAPLKLPDL…ALKLIRAATG (147 aa).

This sequence belongs to the thioredoxin family. Monomer.

Its subcellular location is the cell membrane. Functionally, involved in cytochrome aa3 assembly. This is Thiol:disulfide interchange protein TlpA (tlpA) from Bradyrhizobium diazoefficiens (strain JCM 10833 / BCRC 13528 / IAM 13628 / NBRC 14792 / USDA 110).